The following is a 1123-amino-acid chain: Mediator of RNA polymerase II transcription subunit 14 (1123 aa).

Residues 450-484 (KQSDASDEQQNNIEPNEESLEDLREDNNEDESEPQ) form a disordered region.

This sequence belongs to the Mediator complex subunit 14 family. In terms of assembly, component of the Mediator complex.

The protein localises to the nucleus. Component of the Mediator complex, a coactivator involved in the regulated transcription of nearly all RNA polymerase II-dependent genes. Mediator functions as a bridge to convey information from gene-specific regulatory proteins to the basal RNA polymerase II transcription machinery. Mediator is recruited to promoters by direct interactions with regulatory proteins and serves as a scaffold for the assembly of a functional preinitiation complex with RNA polymerase II and the general transcription factors. This Debaryomyces hansenii (strain ATCC 36239 / CBS 767 / BCRC 21394 / JCM 1990 / NBRC 0083 / IGC 2968) (Yeast) protein is Mediator of RNA polymerase II transcription subunit 14 (RGR1).